The following is a 182-amino-acid chain: ATP-dependent protease subunit HslV (182 aa).

Residue Thr-6 is part of the active site. Positions 164, 167, and 170 each coordinate Na(+).

It belongs to the peptidase T1B family. HslV subfamily. As to quaternary structure, a double ring-shaped homohexamer of HslV is capped on each side by a ring-shaped HslU homohexamer. The assembly of the HslU/HslV complex is dependent on binding of ATP.

The protein resides in the cytoplasm. It catalyses the reaction ATP-dependent cleavage of peptide bonds with broad specificity.. Allosterically activated by HslU binding. Functionally, protease subunit of a proteasome-like degradation complex believed to be a general protein degrading machinery. This Borrelia garinii subsp. bavariensis (strain ATCC BAA-2496 / DSM 23469 / PBi) (Borreliella bavariensis) protein is ATP-dependent protease subunit HslV.